We begin with the raw amino-acid sequence, 317 residues long: Transaldolase A (317 aa).

The Schiff-base intermediate with substrate role is filled by Lys-132.

It belongs to the transaldolase family. Type 1 subfamily. In terms of assembly, homodimer.

The protein localises to the cytoplasm. It catalyses the reaction D-sedoheptulose 7-phosphate + D-glyceraldehyde 3-phosphate = D-erythrose 4-phosphate + beta-D-fructose 6-phosphate. It functions in the pathway carbohydrate degradation; pentose phosphate pathway; D-glyceraldehyde 3-phosphate and beta-D-fructose 6-phosphate from D-ribose 5-phosphate and D-xylulose 5-phosphate (non-oxidative stage): step 2/3. Transaldolase is important for the balance of metabolites in the pentose-phosphate pathway. The polypeptide is Transaldolase A (talA) (Pasteurella multocida (strain Pm70)).